The following is a 226-amino-acid chain: ATP synthase subunit a (226 aa).

The next 7 membrane-spanning stretches (helical) occupy residues 18–38 (FIIG…ARYA), 44–64 (VVPS…ISFA), 79–99 (LAAT…IPGF), 105–125 (SWSF…FEGI), 137–157 (FMGP…ISHF), 177–197 (FLLV…FAIL), and 202–222 (LLQA…AVVV).

It belongs to the ATPase A chain family. As to quaternary structure, F-type ATPases have 2 components, CF(1) - the catalytic core - and CF(0) - the membrane proton channel. CF(1) has five subunits: alpha(3), beta(3), gamma(1), delta(1), epsilon(1). CF(0) has three main subunits: a(1), b(2) and c(9-12). The alpha and beta chains form an alternating ring which encloses part of the gamma chain. CF(1) is attached to CF(0) by a central stalk formed by the gamma and epsilon chains, while a peripheral stalk is formed by the delta and b chains.

Its subcellular location is the cell inner membrane. In terms of biological role, key component of the proton channel; it plays a direct role in the translocation of protons across the membrane. This is ATP synthase subunit a from Helicobacter hepaticus (strain ATCC 51449 / 3B1).